Consider the following 199-residue polypeptide: Hematopoietic prostaglandin D synthase (199 aa).

A GST N-terminal domain is found at 2–79 (PNYKLLYFNM…YLTKNTDLAG (78 aa)). Residues Tyr8, Arg14, Trp39, 49–51 (GKI), and 63–64 (QS) each bind glutathione. One can recognise a GST C-terminal domain in the interval 81 to 199 (TELEQCQVDA…WILKRPQTKL (119 aa)).

It belongs to the GST superfamily. Sigma family. Homodimer. Glutathione is required as a cofactor. In terms of tissue distribution, highly expressed in spleen and bone marrow. Lower levels of expression in small intestine, colon, liver, pancreas and skin. Not detected in brain, heart, lung or kidney (at protein level).

Its subcellular location is the cytoplasm. It carries out the reaction prostaglandin H2 = prostaglandin D2. The catalysed reaction is RX + glutathione = an S-substituted glutathione + a halide anion + H(+). It catalyses the reaction 2-glyceryl-prostaglandin H2 = 2-glyceryl-prostaglandin D2. Functionally, bifunctional enzyme which catalyzes both the conversion of PGH2 to PGD2, a prostaglandin involved in smooth muscle contraction/relaxation and a potent inhibitor of platelet aggregation, and the conjugation of glutathione with a wide range of aryl halides and organic isothiocyanates. Also exhibits low glutathione-peroxidase activity towards cumene hydroperoxide. This chain is Hematopoietic prostaglandin D synthase, found in Rattus norvegicus (Rat).